The primary structure comprises 61 residues: MFTLKKSLLLLFFLATINLSFCEQERNAEEERRDEPDERNAEVEKRFFPIVGKLLFGLLGK.

Positions 1 to 22 are cleaved as a signal peptide; it reads MFTLKKSLLLLFFLATINLSFC. The propeptide occupies 23-46; the sequence is EQERNAEEERRDEPDERNAEVEKR. Leu59 is subject to Leucine amide.

This sequence belongs to the frog skin active peptide (FSAP) family. Temporin subfamily. In terms of tissue distribution, expressed by the skin glands.

The protein resides in the secreted. Antimicrobial peptide with activity against Gram-positive and Gram-negative bacteria and against fungi. Has been tested against S.aureus (MIC=7.5 ug/mL), B.pumilus (MIC=15.0 ug/mL), B.cereus (MIC=75.0 ug/mL), E.coli (MIC=15.0 ug/mL), B.dysenteriae (MIC=30.0 ug/mL), A.cacoaceticus (MIC=60.0 ug/mL), P.aeruginosa (MIC=7.5 ug/mL) and C.albicans (MIC=5.0 ug/mL). Also shows a weak hemolytic activity. This Amolops loloensis (Lolokou Sucker Frog) protein is Temporin-ALj.